Reading from the N-terminus, the 587-residue chain is Pyruvate kinase (587 aa).

R33 provides a ligand contact to substrate. Positions 35, 37, 67, and 68 each coordinate K(+). ATP is bound at residue 35–38; sequence NFSH. Positions 74 and 157 each coordinate ATP. Residue K221 participates in substrate binding. Residue E223 participates in Mg(2+) binding. 3 residues coordinate substrate: G246, D247, and T279. Residue D247 coordinates Mg(2+).

Belongs to the pyruvate kinase family. This sequence in the C-terminal section; belongs to the PEP-utilizing enzyme family. Homotetramer. Mg(2+) is required as a cofactor. The cofactor is K(+). Post-translationally, the N-terminus is blocked.

The enzyme catalyses pyruvate + ATP = phosphoenolpyruvate + ADP + H(+). The protein operates within carbohydrate degradation; glycolysis; pyruvate from D-glyceraldehyde 3-phosphate: step 5/5. Its activity is regulated as follows. Exhibits homotropic positive cooperativity for PEP. Allosterically activated by ribose-5-phosphate, AMP and other nucleoside monophosphates but not by fructose-1,6-bisphosphate. In terms of biological role, catalyzes the phosphoryl transfer from phosphoenolpyruvate (PEP) to ADP to form pyruvate and ATP. Has a broad specificity for nucleoside diphosphates and can use ADP, GDP, IDP and UDP. This Geobacillus stearothermophilus (Bacillus stearothermophilus) protein is Pyruvate kinase (pyk).